The following is a 407-amino-acid chain: Substance-P receptor (407 aa).

At 1–31 the chain is on the extracellular side; that stretch reads MDNVLPMDSDLFPNISTNTSESNQFVQPTWQ. 2 N-linked (GlcNAc...) asparagine glycosylation sites follow: Asn-14 and Asn-18. A helical membrane pass occupies residues 32 to 54; that stretch reads IVLWAAAYTVIVVTSVVGNVVVI. Over 55–64 the chain is Cytoplasmic; it reads WIILAHKRMR. The chain crosses the membrane as a helical span at residues 65-86; it reads TVTNYFLVNLAFAEACMAAFNT. Residues 87 to 106 are Extracellular-facing; sequence VVNFTYAVHNVWYYGLFYCK. Cysteines 105 and 180 form a disulfide. The helical transmembrane segment at 107-128 threads the bilayer; sequence FHNFFPIAALFASIYSMTAVAF. Residues 129 to 148 are Cytoplasmic-facing; sequence DRYMAIIHPLQPRLSATATK. Residues 149–169 traverse the membrane as a helical segment; that stretch reads VVIFVIWVLALLLAFPQGYYS. Topologically, residues 170–194 are extracellular; sequence TTETMPSRVVCMIEWPEHPNRTYEK. Residues 195 to 219 traverse the membrane as a helical segment; the sequence is AYHICVTVLIYFLPLLVIGYAYTVV. Residues 220 to 248 are Cytoplasmic-facing; sequence GITLWASEIPGDSSDRYHEQVSAKRKVVK. The helical transmembrane segment at 249 to 270 threads the bilayer; sequence MMIVVVCTFAICWLPFHVFFLL. The Extracellular portion of the chain corresponds to 271–283; the sequence is PYINPDLYLKKFI. The helical transmembrane segment at 284 to 308 threads the bilayer; it reads QQVYLASMWLAMSSTMYNPIIYCCL. Residues 309–407 lie on the Cytoplasmic side of the membrane; the sequence is NDRFRLGFKH…SSSFYSNMLA (99 aa). Cys-322 carries the S-palmitoyl cysteine lipid modification. Residues 362–407 form a disordered region; it reads VGAHEEEPEEGPKATPSSLDLTSNGSSRSNSKTMTESSSFYSNMLA. Polar residues predominate over residues 376-407; the sequence is TPSSLDLTSNGSSRSNSKTMTESSSFYSNMLA.

The protein belongs to the G-protein coupled receptor 1 family. Interacts with ARRB1.

The protein resides in the cell membrane. This is a receptor for the tachykinin neuropeptide substance P. It is probably associated with G proteins that activate a phosphatidylinositol-calcium second messenger system. The rank order of affinity of this receptor to tachykinins is: substance P &gt; substance K &gt; neuromedin-K. In Rattus norvegicus (Rat), this protein is Substance-P receptor (Tacr1).